Consider the following 258-residue polypeptide: Archaerhodopsin-3 (258 aa).

Positions methionine 1–leucine 6 are excised as a propeptide. Glutamine 7 carries the post-translational modification Pyrrolidone carboxylic acid. Residues glutamine 7 to proline 18 are Extracellular-facing. Residues glutamate 19–arginine 40 form a helical membrane-spanning segment. The Cytoplasmic portion of the chain corresponds to glycine 41–alanine 49. A helical membrane pass occupies residues arginine 50 to phenylalanine 71. Residues phenylalanine 72–tyrosine 89 lie on the Extracellular side of the membrane. Residues tyrosine 90–alanine 111 form a helical membrane-spanning segment. Residues lysine 112–aspartate 114 lie on the Cytoplasmic side of the membrane. The chain crosses the membrane as a helical span at residues arginine 115 to leucine 137. Residues serine 138–alanine 141 are Extracellular-facing. A helical membrane pass occupies residues isoleucine 142–alanine 170. Over lysine 171–arginine 173 the chain is Cytoplasmic. The chain crosses the membrane as a helical span at residues glycine 174–glycine 202. Topologically, residues threonine 203–glycine 210 are extracellular. A helical membrane pass occupies residues leucine 211–threonine 243. Lysine 226 is subject to N6-(retinylidene)lysine. The Cytoplasmic portion of the chain corresponds to glutamate 244–aspartate 258.

This sequence belongs to the archaeal/bacterial/fungal opsin family.

Its subcellular location is the cell membrane. Its function is as follows. Light-driven proton pump. The sequence is that of Archaerhodopsin-3 (aop3) from Halorubrum sodomense.